The chain runs to 760 residues: Prolyl endopeptidase FAP (760 aa).

Over 1–4 (MKTW) the chain is Cytoplasmic. A helical; Signal-anchor for type II membrane protein transmembrane segment spans residues 5-25 (LKIVFGVATSAVLALLVMCIV). Over 26 to 760 (LRPSRVHNSE…FLKQCFSLSD (735 aa)) the chain is Extracellular. N-linked (GlcNAc...) asparagine glycosylation is found at Asn-49, Asn-92, and Asn-99. 2 residues coordinate substrate: Glu-203 and Glu-204. N-linked (GlcNAc...) asparagine glycosylation is found at Asn-227 and Asn-314. 3 disulfides stabilise this stretch: Cys-321–Cys-332, Cys-438–Cys-441, and Cys-448–Cys-466. A coiled-coil region spans residues 481–512 (TDQEIKILEDNKELENALKNIQLPKEEIKKLK). Ser-624 functions as the Charge relay system in the catalytic mechanism. A disulfide bond links Cys-643 and Cys-755. An N-linked (GlcNAc...) asparagine glycan is attached at Asn-679. Catalysis depends on charge relay system residues Asp-702 and His-734.

Belongs to the peptidase S9B family. Homodimer; homodimerization is required for activity of both plasma membrane and soluble forms. The monomer is inactive. Heterodimer with DPP4. Interacts with PLAUR; the interaction occurs at the cell surface of invadopodia membranes. Interacts with ITGB1. Interacts with ITGA3. Associates with integrin alpha-3/beta-1; the association occurs in a collagen-dependent manner at the cell surface of invadopodia membranes. In terms of processing, N-glycosylated. Post-translationally, the N-terminus may be blocked.

It is found in the cell surface. It localises to the cell membrane. Its subcellular location is the cell projection. The protein resides in the lamellipodium membrane. The protein localises to the invadopodium membrane. It is found in the ruffle membrane. It localises to the membrane. Its subcellular location is the secreted. The enzyme catalyses Release of an N-terminal dipeptide, Xaa-Yaa-|-Zaa-, from a polypeptide, preferentially when Yaa is Pro, provided Zaa is neither Pro nor hydroxyproline.. It carries out the reaction Hydrolysis of Pro-|-Xaa &gt;&gt; Ala-|-Xaa in oligopeptides.. With respect to regulation, gelatinase activity is inhibited by serine-protease inhibitors, such as phenylmethylsulfonyl fluoride (PMSF), 4-(2-aminoethyl)-benzenesulfonyl fluoride hydrochloride (AEBSF), 4-amidino phenylsulfonyl fluoride (APSF) and diisopropyl fluorophosphate (DFP), N-ethylmaleimide (NEM) and phenylmethylsulfonyl fluoride (PMSF). Dipeptidyl peptidase activity is inhibited by 2,2'-azino-bis(3-ethylbenzthiazoline-6-sulfonic acid), diisopropylfluorophosphate (DFP). Prolyl endopeptidase activity is inhibited by the boronic acid peptide Ac-Gly-BoroPro, Ac-Gly-Pro-chloromethyl ketone and Thr-Ser-Gly-chloromethyl ketone. Its function is as follows. Cell surface glycoprotein serine protease that participates in extracellular matrix degradation and involved in many cellular processes including tissue remodeling, fibrosis, wound healing, inflammation and tumor growth. Both plasma membrane and soluble forms exhibit post-proline cleaving endopeptidase activity, with a marked preference for Ala/Ser-Gly-Pro-Ser/Asn/Ala consensus sequences, on substrate such as alpha-2-antiplasmin SERPINF2 and SPRY2. Degrade also gelatin, heat-denatured type I collagen, but not native collagen type I and IV, vibronectin, tenascin, laminin, fibronectin, fibrin or casein. Also has dipeptidyl peptidase activity, exhibiting the ability to hydrolyze the prolyl bond two residues from the N-terminus of synthetic dipeptide substrates provided that the penultimate residue is proline, with a preference for Ala-Pro, Ile-Pro, Gly-Pro, Arg-Pro and Pro-Pro. Natural neuropeptide hormones for dipeptidyl peptidase are the neuropeptide Y (NPY), peptide YY (PYY), substance P (TAC1) and brain natriuretic peptide 32 (NPPB). The plasma membrane form, in association with either DPP4, PLAUR or integrins, is involved in the pericellular proteolysis of the extracellular matrix (ECM), and hence promotes cell adhesion, migration and invasion through the ECM. Plays a role in tissue remodeling during development and wound healing. Participates in the cell invasiveness towards the ECM in malignant melanoma cancers. Enhances tumor growth progression by increasing angiogenesis, collagen fiber degradation and apoptosis and by reducing antitumor response of the immune system. Promotes glioma cell invasion through the brain parenchyma by degrading the proteoglycan brevican. Acts as a tumor suppressor in melanocytic cells through regulation of cell proliferation and survival in a serine protease activity-independent manner. The chain is Prolyl endopeptidase FAP from Bos taurus (Bovine).